The primary structure comprises 76 residues: UPF0154 protein Exig_1099 (76 aa).

A helical membrane pass occupies residues 4 to 24 (WIWILIALLCLVAGVALGFYI). A disordered region spans residues 54 to 76 (KPSQKKVNQVMRSMSGSMKSPKK).

The protein belongs to the UPF0154 family.

Its subcellular location is the cell membrane. The protein is UPF0154 protein Exig_1099 of Exiguobacterium sibiricum (strain DSM 17290 / CCUG 55495 / CIP 109462 / JCM 13490 / 255-15).